Reading from the N-terminus, the 746-residue chain is Exocyst complex component 3-like protein (746 aa).

Residues 1–23 (MDSAAKDEMQPALSPGPEWPEQE) form a disordered region. Residues 1–370 (MDSAAKDEMQ…DVSQLEPLLT (370 aa)) form a mediates interaction with EXOC2, EXOC4 and EXOC5 region.

The protein belongs to the SEC6 family. As to quaternary structure, interacts with EXOC2, EXOC4 and EXOC5; may be part of the exocyst.

It localises to the cytoplasmic vesicle. The protein resides in the secretory vesicle. Its function is as follows. As part of the exocyst, may play a role in regulated exocytosis of insulin granules. The sequence is that of Exocyst complex component 3-like protein (EXOC3L1) from Homo sapiens (Human).